The sequence spans 793 residues: Tripartite terminase subunit 1 (793 aa).

The C3H1-type zinc-finger motif lies at 206–234 (CSVCFEELCVTANSGDSTHKRIVRKICDH). An ATP-binding site is contributed by 697–704 (FSSVFKCG).

It belongs to the herpesviridae TRM1 protein family. In terms of assembly, associates with TRM2 and TRM3 to form the tripartite terminase complex. Interacts with portal protein.

It localises to the host nucleus. Its function is as follows. Component of the molecular motor that translocates viral genomic DNA in empty capsid during DNA packaging. Forms a tripartite terminase complex together with TRM2 and TRM3 in the host cytoplasm. Once the complex reaches the host nucleus, it interacts with the capsid portal vertex. This portal forms a ring in which genomic DNA is translocated into the capsid. TRM1 carries an endonuclease activity that plays an important role for the cleavage of concatemeric viral DNA into unit length genomes. This Gallid herpesvirus 2 (strain Chicken/Md5/ATCC VR-987) (GaHV-2) protein is Tripartite terminase subunit 1.